We begin with the raw amino-acid sequence, 239 residues long: uncharacterized protein (239 aa).

The dksA C4-type; degenerate zinc finger occupies 94–114 (CEVSGKEIPFERLEALPTATT). Over residues 133–158 (ETPFGQFEFDDDEEIRAPYDSEDSYQ) the composition is skewed to acidic residues. The segment at 133–182 (ETPFGQFEFDDDEEIRAPYDSEDSYQDVEKYGNSQTPQDMENPPLSYDDM) is disordered.

This is an uncharacterized protein from Bacillus subtilis (strain 168).